Consider the following 85-residue polypeptide: MERGNRKSRIGVVVSNKMAKTVVVKVERRVADPKYGKIVKRAEKYKAHDENNACQIGDKVRIVETRPMSKDKRWRIAETLEKAEV.

This sequence belongs to the universal ribosomal protein uS17 family. As to quaternary structure, part of the 30S ribosomal subunit.

One of the primary rRNA binding proteins, it binds specifically to the 5'-end of 16S ribosomal RNA. The sequence is that of Small ribosomal subunit protein uS17 from Anaeromyxobacter sp. (strain Fw109-5).